We begin with the raw amino-acid sequence, 373 residues long: sn-glycerol-3-phosphate import ATP-binding protein UgpC (373 aa).

An ABC transporter domain is found at 4 to 235 (LTLSNITKSY…PASVFVATFI (232 aa)). 37-44 (GPSGCGKS) provides a ligand contact to ATP.

This sequence belongs to the ABC transporter superfamily. sn-glycerol-3-phosphate importer (TC 3.A.1.1.3) family. In terms of assembly, the complex is composed of two ATP-binding proteins (UgpC), two transmembrane proteins (UgpA and UgpE) and a solute-binding protein (UgpB).

The protein resides in the cell inner membrane. The catalysed reaction is sn-glycerol 3-phosphate(out) + ATP + H2O = sn-glycerol 3-phosphate(in) + ADP + phosphate + H(+). In terms of biological role, part of the ABC transporter complex UgpBAEC involved in sn-glycerol-3-phosphate (G3P) import. Responsible for energy coupling to the transport system. The polypeptide is sn-glycerol-3-phosphate import ATP-binding protein UgpC (Psychromonas ingrahamii (strain DSM 17664 / CCUG 51855 / 37)).